The primary structure comprises 152 residues: Ninjurin-1 (152 aa).

Met1 carries the post-translational modification N-acetylmethionine. Residues 1 to 10 (MESGTEEYEL) are compositionally biased toward acidic residues. The disordered stretch occupies residues 1 to 29 (MESGTEEYELNGDLRPGSPGSPDALPPRW). The Extracellular segment spans residues 1-78 (MESGTEEYEL…EQGNDFAFFV (78 aa)). Phosphoserine is present on residues Ser18 and Ser21. The N-terminal adhesion motif stretch occupies residues 26–37 (PPRWGLRNRPIN). The segment at 40-69 (HYANKKSAAESMLDIALLMANASQLKAVVE) is required to induce plasma membrane rupture. Residues 44 to 55 (KKSAAESMLDIA) form a helix alpha1 region. The helix alpha2 stretch occupies residues 58-74 (MANASQLKAVVEQGNDF). An N-linked (GlcNAc...) asparagine glycan is attached at Asn60. A helical transmembrane segment spans residues 79-103 (PLVVLISISLVLQIGVGVLLIFLVK). Over 104 to 113 (YDLNNPAKHA) the chain is Cytoplasmic. The helical transmembrane segment at 114–138 (KLDFLNNLATGLVFIIVVVNIFITA) threads the bilayer. Residues 139 to 152 (FGVQKPVMDVAPRQ) lie on the Extracellular side of the membrane.

The protein belongs to the ninjurin family. In terms of assembly, homodimer; in absence of death stimuli, forms an inactive homodimer. Homooligomer; in response to death stimuli, homooligomerizes into long, highly branched filaments and large, ring-shaped structures in the membrane. Cleaved by MMP9 protease to generate the Secreted ninjurin-1 form. In terms of processing, N-linked glycosylation is required for homooligomerization.

Its subcellular location is the cell membrane. The protein resides in the synaptic cell membrane. It is found in the secreted. Its activity is regulated as follows. In response to death stimuli, homooligomerizes and disrupts membrane integrity by introducing the hydrophilic faces of alpha1 and alpha2 helices into the hydrophobic membrane. Homooligomerization and ability to mediate plasma membrane rupture is inhibited by glycine; it is unclear whether glycine directly or indirectly inhibits homooligomerization. In normal conditions, NINJ1 is autoinhibited via formation of a homodimer: in the inactive homodimer, the alpha1 and alpha2 helices (residues 44-74) form a single transmembrane region without a kink, in which hydrophilic faces of alpha1 and alpha2 helices are sequestered. Its function is as follows. Effector of various programmed cell death, such as pyroptosis and necroptosis, which mediates plasma membrane rupture (cytolysis). Oligomerizes in response to death stimuli and forms ring-like structures on the plasma membrane: acts by cutting and shedding membrane disks, like a cookie cutter, leading to membrane damage and loss that cannot be repaired by the cell. Plasma membrane rupture leads to release intracellular molecules named damage-associated molecular patterns (DAMPs) that propagate the inflammatory response. Mechanistically, mediates plasma membrane rupture by introducing hydrophilic faces of 2 alpha helices into the hydrophobic membrane. Induces plasma membrane rupture downstream of Gasdermin (GSDMA, GSDMB, GSDMC, GSDMD, or GSDME) or MLKL during pyroptosis or necroptosis, respectively. Acts as an effector of PANoptosis downstream of CASP1, CASP4, CASP8 and RIPK3. Also induces plasma membrane rupture in response to cell swelling caused by osmotic stress and ferroptosis downstream of lipid peroxidation. Acts as a regulator of Toll-like receptor 4 (TLR4) signaling triggered by lipopolysaccharide (LPS) during systemic inflammation; directly binds LPS. Involved in leukocyte migration during inflammation by promoting transendothelial migration of macrophages via homotypic binding. Promotes the migration of monocytes across the brain endothelium to central nervous system inflammatory lesions. Also acts as a homophilic transmembrane adhesion molecule involved in various processes such as axonal growth, cell chemotaxis and angiogenesis. Promotes cell adhesion by mediating homophilic interactions via its extracellular N-terminal adhesion motif (N-NAM). Involved in the progression of the inflammatory stress by promoting cell-to-cell interactions between immune cells and endothelial cells. Plays a role in nerve regeneration by promoting maturation of Schwann cells. Acts as a regulator of angiogenesis. Promotes the formation of new vessels by mediating the interaction between capillary pericyte cells and endothelial cells. Also mediates vascular functions in penile tissue as well as vascular formation. Promotes osteoclasts development by enhancing the survival of prefusion osteoclasts. Also involved in striated muscle growth and differentiation. Also involved in cell senescence in a p53/TP53 manner, possibly by acting as an indirect regulator of p53/TP53 mRNA translation. Functionally, secreted form generated by cleavage, which has chemotactic activity. Acts as an anti-inflammatory mediator by promoting monocyte recruitment, thereby ameliorating atherosclerosis. In Mus musculus (Mouse), this protein is Ninjurin-1.